The primary structure comprises 134 residues: Ribosome-binding factor A (134 aa).

It belongs to the RbfA family. As to quaternary structure, monomer. Binds 30S ribosomal subunits, but not 50S ribosomal subunits or 70S ribosomes.

The protein localises to the cytoplasm. Functionally, one of several proteins that assist in the late maturation steps of the functional core of the 30S ribosomal subunit. Associates with free 30S ribosomal subunits (but not with 30S subunits that are part of 70S ribosomes or polysomes). Required for efficient processing of 16S rRNA. May interact with the 5'-terminal helix region of 16S rRNA. The sequence is that of Ribosome-binding factor A from Baumannia cicadellinicola subsp. Homalodisca coagulata.